The primary structure comprises 505 residues: Maturase K (505 aa).

This sequence belongs to the intron maturase 2 family. MatK subfamily.

It is found in the plastid. The protein localises to the chloroplast. Its function is as follows. Usually encoded in the trnK tRNA gene intron. Probably assists in splicing its own and other chloroplast group II introns. This is Maturase K from Physcomitrium patens (Spreading-leaved earth moss).